We begin with the raw amino-acid sequence, 59 residues long: Antibacterial peptide enbocin (59 aa).

An N-terminal signal peptide occupies residues methionine 1–glycine 20. Lysine 21 is a propeptide. Serine 58 carries the post-translational modification Serine amide.

This sequence belongs to the cecropin family.

Its subcellular location is the secreted. Functionally, has antibacterial activity against Gram-positive and Gram-negative bacteria. This chain is Antibacterial peptide enbocin, found in Bombyx mori (Silk moth).